An 81-amino-acid polypeptide reads, in one-letter code: Putative sulfur carrier protein VNG_5061C/VNG_5236C/VNG_6059C/VNG_6467C (81 aa).

C18 acts as the Cysteine persulfide intermediate in catalysis.

This sequence belongs to the sulfur carrier protein TusA family.

This is Putative sulfur carrier protein VNG_5061C/VNG_5236C/VNG_6059C/VNG_6467C from Halobacterium salinarum (strain ATCC 700922 / JCM 11081 / NRC-1) (Halobacterium halobium).